We begin with the raw amino-acid sequence, 179 residues long: Phosphopantetheine adenylyltransferase (179 aa).

A substrate-binding site is contributed by Ser-23. Residues 23-24 and His-31 contribute to the ATP site; that span reads SF. Positions 55, 87, and 101 each coordinate substrate. Residues 102–104, Glu-112, and 137–143 each bind ATP; these read GIR and FAHVSSS.

This sequence belongs to the bacterial CoaD family. As to quaternary structure, homohexamer. Mg(2+) serves as cofactor.

It localises to the cytoplasm. The enzyme catalyses (R)-4'-phosphopantetheine + ATP + H(+) = 3'-dephospho-CoA + diphosphate. Its pathway is cofactor biosynthesis; coenzyme A biosynthesis; CoA from (R)-pantothenate: step 4/5. Its function is as follows. Reversibly transfers an adenylyl group from ATP to 4'-phosphopantetheine, yielding dephospho-CoA (dPCoA) and pyrophosphate. This Rhodopirellula baltica (strain DSM 10527 / NCIMB 13988 / SH1) protein is Phosphopantetheine adenylyltransferase.